The sequence spans 600 residues: ATP-dependent lipid A-core flippase (600 aa).

4 helical membrane-spanning segments follow: residues 27 to 47 (ISLFLISIVGFLIFASTQPML), 83 to 103 (LLIILIAAWQGLGSYLGNYFL), 174 to 194 (LLFMNWKLTLVMVAILPLIAV), and 267 to 287 (PLLQLVIYSAMAILMFLVLYL). Residues 31–322 (LISIVGFLIF…LSEVSSTIQK (292 aa)) enclose the ABC transmembrane type-1 domain. The 237-residue stretch at 354–590 (LDVRNLSFTY…NGYYARLNAM (237 aa)) folds into the ABC transporter domain. Position 388-395 (388-395 (GRSGSGKS)) interacts with ATP.

This sequence belongs to the ABC transporter superfamily. Lipid exporter (TC 3.A.1.106) family. Homodimer.

It localises to the cell inner membrane. The enzyme catalyses ATP + H2O + lipid A-core oligosaccharideSide 1 = ADP + phosphate + lipid A-core oligosaccharideSide 2.. Its function is as follows. Involved in lipopolysaccharide (LPS) biosynthesis. Translocates lipid A-core from the inner to the outer leaflet of the inner membrane. Transmembrane domains (TMD) form a pore in the inner membrane and the ATP-binding domain (NBD) is responsible for energy generation. In Pseudomonas fluorescens (strain Pf0-1), this protein is ATP-dependent lipid A-core flippase.